The primary structure comprises 83 residues: RNA-binding protein Hfq (83 aa).

Residues Asp-9–Leu-68 enclose the Sm domain.

The protein belongs to the Hfq family. In terms of assembly, homohexamer.

RNA chaperone that binds small regulatory RNA (sRNAs) and mRNAs to facilitate mRNA translational regulation in response to envelope stress, environmental stress and changes in metabolite concentrations. Also binds with high specificity to tRNAs. This Pseudoalteromonas atlantica (strain T6c / ATCC BAA-1087) protein is RNA-binding protein Hfq.